The following is a 380-amino-acid chain: Cytochrome b (380 aa).

4 consecutive transmembrane segments (helical) span residues 34-54 (FGSL…LLAM), 78-99 (WLIR…FLHI), 114-134 (WNTG…GYVL), and 179-199 (FFAL…IHLT). His-84 and His-98 together coordinate heme b. Heme b is bound by residues His-183 and His-197. His-202 is an a ubiquinone binding site. Transmembrane regions (helical) follow at residues 227–247 (LKDI…ALFS), 289–309 (LGGV…PFLH), 321–341 (LSQI…WIGS), and 348–368 (FIII…ILFP).

This sequence belongs to the cytochrome b family. In terms of assembly, the cytochrome bc1 complex contains 11 subunits: 3 respiratory subunits (MT-CYB, CYC1 and UQCRFS1), 2 core proteins (UQCRC1 and UQCRC2) and 6 low-molecular weight proteins (UQCRH/QCR6, UQCRB/QCR7, UQCRQ/QCR8, UQCR10/QCR9, UQCR11/QCR10 and a cleavage product of UQCRFS1). This cytochrome bc1 complex then forms a dimer. Heme b is required as a cofactor.

It is found in the mitochondrion inner membrane. In terms of biological role, component of the ubiquinol-cytochrome c reductase complex (complex III or cytochrome b-c1 complex) that is part of the mitochondrial respiratory chain. The b-c1 complex mediates electron transfer from ubiquinol to cytochrome c. Contributes to the generation of a proton gradient across the mitochondrial membrane that is then used for ATP synthesis. The chain is Cytochrome b (MT-CYB) from Pavo muticus (Green peafowl).